A 98-amino-acid chain; its full sequence is MSLVYMNIMTAFAVSLTGLLMYRSHLMSSLLCLEGMMLSLFVMATLMILNSHFTLASMMPIILLVFAACEAALGLSLLVMVSNTYGTDYVQNLNLLQC.

3 helical membrane passes run 1–21 (MSLVYMNIMTAFAVSLTGLLM), 29–49 (SLLCLEGMMLSLFVMATLMIL), and 61–81 (IILLVFAACEAALGLSLLVMV).

This sequence belongs to the complex I subunit 4L family. As to quaternary structure, core subunit of respiratory chain NADH dehydrogenase (Complex I) which is composed of 45 different subunits.

The protein resides in the mitochondrion inner membrane. It catalyses the reaction a ubiquinone + NADH + 5 H(+)(in) = a ubiquinol + NAD(+) + 4 H(+)(out). Its function is as follows. Core subunit of the mitochondrial membrane respiratory chain NADH dehydrogenase (Complex I) which catalyzes electron transfer from NADH through the respiratory chain, using ubiquinone as an electron acceptor. Part of the enzyme membrane arm which is embedded in the lipid bilayer and involved in proton translocation. The sequence is that of NADH-ubiquinone oxidoreductase chain 4L (MT-ND4L) from Pantholops hodgsonii (Chiru).